The following is a 260-amino-acid chain: Small ribosomal subunit protein bS6 (260 aa).

This sequence belongs to the bacterial ribosomal protein bS6 family.

Its function is as follows. Binds together with bS18 to 16S ribosomal RNA. In Wolbachia sp. subsp. Brugia malayi (strain TRS), this protein is Small ribosomal subunit protein bS6.